A 521-amino-acid polypeptide reads, in one-letter code: Bifunctional purine biosynthesis protein PurH (521 aa).

Positions 1 to 147 (MAKITRALIS…KNNADVTVVV (147 aa)) constitute an MGS-like domain.

This sequence belongs to the PurH family.

It carries out the reaction (6R)-10-formyltetrahydrofolate + 5-amino-1-(5-phospho-beta-D-ribosyl)imidazole-4-carboxamide = 5-formamido-1-(5-phospho-D-ribosyl)imidazole-4-carboxamide + (6S)-5,6,7,8-tetrahydrofolate. The catalysed reaction is IMP + H2O = 5-formamido-1-(5-phospho-D-ribosyl)imidazole-4-carboxamide. It functions in the pathway purine metabolism; IMP biosynthesis via de novo pathway; 5-formamido-1-(5-phospho-D-ribosyl)imidazole-4-carboxamide from 5-amino-1-(5-phospho-D-ribosyl)imidazole-4-carboxamide (10-formyl THF route): step 1/1. The protein operates within purine metabolism; IMP biosynthesis via de novo pathway; IMP from 5-formamido-1-(5-phospho-D-ribosyl)imidazole-4-carboxamide: step 1/1. This Geobacter metallireducens (strain ATCC 53774 / DSM 7210 / GS-15) protein is Bifunctional purine biosynthesis protein PurH.